We begin with the raw amino-acid sequence, 1057 residues long: Carbamoyl phosphate synthase large chain (1057 aa).

The tract at residues Met-1–Glu-401 is carboxyphosphate synthetic domain. ATP-binding residues include Arg-129, Arg-169, Gly-175, Gly-176, Lys-208, Ile-210, Glu-215, Gly-241, Ile-242, His-243, Gln-284, and Glu-298. The 195-residue stretch at Arg-133 to Val-327 folds into the ATP-grasp 1 domain. Gln-284, Glu-298, and Asn-300 together coordinate Mg(2+). Mn(2+)-binding residues include Gln-284, Glu-298, and Asn-300. Residues Tyr-402 to Ser-546 form an oligomerization domain region. The tract at residues Ile-547–Gly-929 is carbamoyl phosphate synthetic domain. The ATP-grasp 2 domain maps to Glu-671–Met-861. Residues Arg-707, Arg-746, Leu-748, Glu-752, Gly-777, Val-778, His-779, Ser-780, Gln-820, and Glu-832 each coordinate ATP. Mg(2+)-binding residues include Gln-820, Glu-832, and Asn-834. Residues Gln-820, Glu-832, and Asn-834 each coordinate Mn(2+). The region spanning Val-930–Met-1057 is the MGS-like domain. Positions Val-930–Met-1057 are allosteric domain.

This sequence belongs to the CarB family. Composed of two chains; the small (or glutamine) chain promotes the hydrolysis of glutamine to ammonia, which is used by the large (or ammonia) chain to synthesize carbamoyl phosphate. Tetramer of heterodimers (alpha,beta)4. Mg(2+) is required as a cofactor. The cofactor is Mn(2+).

The catalysed reaction is hydrogencarbonate + L-glutamine + 2 ATP + H2O = carbamoyl phosphate + L-glutamate + 2 ADP + phosphate + 2 H(+). It carries out the reaction hydrogencarbonate + NH4(+) + 2 ATP = carbamoyl phosphate + 2 ADP + phosphate + 2 H(+). Its pathway is amino-acid biosynthesis; L-arginine biosynthesis; carbamoyl phosphate from bicarbonate: step 1/1. It functions in the pathway pyrimidine metabolism; UMP biosynthesis via de novo pathway; (S)-dihydroorotate from bicarbonate: step 1/3. Large subunit of the glutamine-dependent carbamoyl phosphate synthetase (CPSase). CPSase catalyzes the formation of carbamoyl phosphate from the ammonia moiety of glutamine, carbonate, and phosphate donated by ATP, constituting the first step of 2 biosynthetic pathways, one leading to arginine and/or urea and the other to pyrimidine nucleotides. The large subunit (synthetase) binds the substrates ammonia (free or transferred from glutamine from the small subunit), hydrogencarbonate and ATP and carries out an ATP-coupled ligase reaction, activating hydrogencarbonate by forming carboxy phosphate which reacts with ammonia to form carbamoyl phosphate. This chain is Carbamoyl phosphate synthase large chain, found in Staphylococcus haemolyticus (strain JCSC1435).